We begin with the raw amino-acid sequence, 91 residues long: MANNPGAKKAIRKIARRTEVNTARRSRVRTFLRKFEDALAAGDAAVAKAAFIEAQSELMRAVSKGVVHPNTGSRKVSRLAARLKKLDQAAA.

Belongs to the bacterial ribosomal protein bS20 family.

Its function is as follows. Binds directly to 16S ribosomal RNA. This chain is Small ribosomal subunit protein bS20, found in Caulobacter sp. (strain K31).